The following is a 329-amino-acid chain: MSAFNSISVLGGGAWGTALALTAARAGRSVTLWEHDPGHAQHLEQTRESRFLPGVMLEPSIKVTRDLAEAARAEALLLVVPAQVLRSVATSLQPLIAARTPLIACAKGIEHGTHRFMTEIIAECAPNAIPAILSGPSFAADVARGLPTAVTIAASDAAIAQALAQAMNSGSFRPYHSTDVRGVELGGATKNVMAIAAGIVAGRKLGASALAAMTTRGFVELVRFGKAYGARIETMHGLSGLGDLTMCCSTPQSRNFSFGMALGRGESIDEAAHGKLAEGYYTAPVLLEMAQAKGVEMPISTAVAAILQGQLGVDAAIEGLLTRPLKAEE.

NADPH contacts are provided by Trp-15, His-35, and Lys-107. Sn-glycerol 3-phosphate contacts are provided by Lys-107, Gly-135, and Ser-137. NADPH is bound at residue Ala-139. Sn-glycerol 3-phosphate-binding residues include Lys-190, Asp-243, Ser-253, Arg-254, and Asn-255. The active-site Proton acceptor is Lys-190. Arg-254 serves as a coordination point for NADPH. Positions 276 and 278 each coordinate NADPH.

This sequence belongs to the NAD-dependent glycerol-3-phosphate dehydrogenase family.

It localises to the cytoplasm. It carries out the reaction sn-glycerol 3-phosphate + NAD(+) = dihydroxyacetone phosphate + NADH + H(+). The catalysed reaction is sn-glycerol 3-phosphate + NADP(+) = dihydroxyacetone phosphate + NADPH + H(+). The protein operates within membrane lipid metabolism; glycerophospholipid metabolism. Catalyzes the reduction of the glycolytic intermediate dihydroxyacetone phosphate (DHAP) to sn-glycerol 3-phosphate (G3P), the key precursor for phospholipid synthesis. This is Glycerol-3-phosphate dehydrogenase [NAD(P)+] from Rhodopseudomonas palustris (strain BisB5).